A 95-amino-acid chain; its full sequence is Transcription and mRNA export factor ENY2-1 (95 aa).

Belongs to the ENY2 family. In terms of assembly, component of the nuclear pore complex (NPC)-associated TREX-2 complex (transcription and export complex 2). Component of the SAGA transcription coactivator-HAT complex. Within the SAGA complex, participates in a subcomplex of SAGA called the DUB module (deubiquitination module).

It is found in the nucleus. It localises to the nucleoplasm. Functionally, involved in mRNA export coupled transcription activation by association with both the TREX-2 and the SAGA complexes. The transcription regulatory histone acetylation (HAT) complex SAGA is a multiprotein complex that activates transcription by remodeling chromatin and mediating histone acetylation and deubiquitination. Within the SAGA complex, participates in a subcomplex that specifically deubiquitinates histones. The SAGA complex is recruited to specific gene promoters by activators, where it is required for transcription. The TREX-2 complex functions in docking export-competent ribonucleoprotein particles (mRNPs) to the nuclear entrance of the nuclear pore complex (nuclear basket). TREX-2 participates in mRNA export and accurate chromatin positioning in the nucleus by tethering genes to the nuclear periphery. This chain is Transcription and mRNA export factor ENY2-1 (eny2-1), found in Salmo salar (Atlantic salmon).